We begin with the raw amino-acid sequence, 150 residues long: UPF0756 membrane protein HD_1071 (150 aa).

The next 4 membrane-spanning stretches (helical) occupy residues methionine 1–leucine 21, tyrosine 52–glycine 72, isoleucine 82–glycine 102, and isoleucine 114–valine 134.

It belongs to the UPF0756 family.

It localises to the cell membrane. This Haemophilus ducreyi (strain 35000HP / ATCC 700724) protein is UPF0756 membrane protein HD_1071.